We begin with the raw amino-acid sequence, 66 residues long: UPF0337 protein pc0632 (66 aa).

Belongs to the UPF0337 (CsbD) family.

In Protochlamydia amoebophila (strain UWE25), this protein is UPF0337 protein pc0632.